A 176-amino-acid polypeptide reads, in one-letter code: Woronin body major protein (176 aa).

A propeptide spanning residues 1–16 (MGYYDDDAHGHVEADA) is cleaved from the precursor. Basic and acidic residues predominate over residues 1-16 (MGYYDDDAHGHVEADA). The disordered stretch occupies residues 1-31 (MGYYDDDAHGHVEADAAPRATTGTGTGSASQ). The short motif at 174-176 (SRL) is the Microbody targeting signal element.

The protein belongs to the eIF-5A family. Hex1 subfamily. As to quaternary structure, forms oligomers. Self-assembles into hexagonal rods.

It is found in the cell septum. Functionally, major component of Woronin bodies, fungal-specific organelles that occlude septal pores in order to separate intact from damaged compartments. Hex-1 binds directly or indirectly to the Woronin body tether that in turn is anchored at the rim of the septal pore. This is Woronin body major protein from Neurospora crassa (strain ATCC 24698 / 74-OR23-1A / CBS 708.71 / DSM 1257 / FGSC 987).